The chain runs to 91 residues: DNA-binding protein HU (91 aa).

Belongs to the bacterial histone-like protein family. In terms of assembly, homodimer.

Histone-like DNA-binding protein which is capable of wrapping DNA to stabilize it, and thus to prevent its denaturation under extreme environmental conditions. The chain is DNA-binding protein HU (hup) from Streptococcus thermophilus.